Consider the following 711-residue polypeptide: Polyribonucleotide nucleotidyltransferase (711 aa).

Positions 491 and 497 each coordinate Mg(2+). Residues 559 to 618 enclose the KH domain; it reads PRLITIKINPEKIRDVIGKGGAVIRALTEETGTQIDISDEGVVTIASVDAAAGQEAKRRI. Positions 628 to 696 constitute an S1 motif domain; it reads GKIYEGTVLK…DRGRLKLSMK (69 aa).

It belongs to the polyribonucleotide nucleotidyltransferase family. It depends on Mg(2+) as a cofactor.

The protein localises to the cytoplasm. The enzyme catalyses RNA(n+1) + phosphate = RNA(n) + a ribonucleoside 5'-diphosphate. Functionally, involved in mRNA degradation. Catalyzes the phosphorolysis of single-stranded polyribonucleotides processively in the 3'- to 5'-direction. This is Polyribonucleotide nucleotidyltransferase from Janthinobacterium sp. (strain Marseille) (Minibacterium massiliensis).